The primary structure comprises 105 residues: Large ribosomal subunit protein uL23 (105 aa).

It belongs to the universal ribosomal protein uL23 family. Part of the 50S ribosomal subunit. Contacts protein L29, and trigger factor when it is bound to the ribosome.

Functionally, one of the early assembly proteins it binds 23S rRNA. One of the proteins that surrounds the polypeptide exit tunnel on the outside of the ribosome. Forms the main docking site for trigger factor binding to the ribosome. The sequence is that of Large ribosomal subunit protein uL23 from Ureaplasma parvum serovar 3 (strain ATCC 27815 / 27 / NCTC 11736).